A 335-amino-acid chain; its full sequence is Probable peroxidase 26 (335 aa).

Positions 1–18 (MVMIHIFLTVMVVGGVSL) are cleaved as a signal peptide. Disulfide bonds link C46–C122, C79–C84, C128–C331, and C205–C237. The active site involves R73. Ca(2+) contacts are provided by D78, V81, G83, D85, and S87. Substrate is bound at residue P168. A heme b-binding site is contributed by H198. S199 contributes to the Ca(2+) binding site. N-linked (GlcNAc...) asparagine glycosylation occurs at N216. Ca(2+) contacts are provided by D255 and S258. 2 N-linked (GlcNAc...) asparagine glycosylation sites follow: N259 and N273.

Belongs to the peroxidase family. Classical plant (class III) peroxidase subfamily. The cofactor is heme b. Requires Ca(2+) as cofactor.

It is found in the secreted. It carries out the reaction 2 a phenolic donor + H2O2 = 2 a phenolic radical donor + 2 H2O. In terms of biological role, removal of H(2)O(2), oxidation of toxic reductants, biosynthesis and degradation of lignin, suberization, auxin catabolism, response to environmental stresses such as wounding, pathogen attack and oxidative stress. The enzyme activity has to be proved. The sequence is that of Probable peroxidase 26 (PER26) from Arabidopsis thaliana (Mouse-ear cress).